The chain runs to 424 residues: Protein TUNICAMYCIN INDUCED 1 (424 aa).

Residues 1–25 (MGHRVLVYVGALFLILFTIFPSSSA) form the signal peptide. Residues Asn197, Asn296, and Asn406 are each glycosylated (N-linked (GlcNAc...) asparagine).

Restricted to pollen grains at high levels.

It is found in the endoplasmic reticulum. Its function is as follows. Involved in the regulation of pollen surface morphology, probably by modulating the secretion of proteins and/or lipids during pollen development. The chain is Protein TUNICAMYCIN INDUCED 1 from Arabidopsis thaliana (Mouse-ear cress).